The following is a 100-amino-acid chain: NAD(P)H-quinone oxidoreductase subunit 4L, chloroplastic (100 aa).

Transmembrane regions (helical) follow at residues 1-21 (MIEN…YGLI), 27-47 (IKVL…LVAF), and 61-81 (FAVF…AIVF).

It belongs to the complex I subunit 4L family. In terms of assembly, NDH is composed of at least 16 different subunits, 5 of which are encoded in the nucleus.

The protein localises to the plastid. Its subcellular location is the chloroplast thylakoid membrane. It carries out the reaction a plastoquinone + NADH + (n+1) H(+)(in) = a plastoquinol + NAD(+) + n H(+)(out). The enzyme catalyses a plastoquinone + NADPH + (n+1) H(+)(in) = a plastoquinol + NADP(+) + n H(+)(out). Functionally, NDH shuttles electrons from NAD(P)H:plastoquinone, via FMN and iron-sulfur (Fe-S) centers, to quinones in the photosynthetic chain and possibly in a chloroplast respiratory chain. The immediate electron acceptor for the enzyme in this species is believed to be plastoquinone. Couples the redox reaction to proton translocation, and thus conserves the redox energy in a proton gradient. This is NAD(P)H-quinone oxidoreductase subunit 4L, chloroplastic from Chaetosphaeridium globosum (Charophycean green alga).